The chain runs to 359 residues: DNA integrity scanning protein DisA (359 aa).

The 139-residue stretch at D7 to S145 folds into the DAC domain. ATP contacts are provided by residues G74, L92, and T105–T109.

This sequence belongs to the DisA family. Homooctamer. The cofactor is Mg(2+).

It carries out the reaction 2 ATP = 3',3'-c-di-AMP + 2 diphosphate. Its function is as follows. Participates in a DNA-damage check-point. DisA forms globular foci that rapidly scan along the chromosomes searching for lesions. Functionally, also has diadenylate cyclase activity, catalyzing the condensation of 2 ATP molecules into cyclic di-AMP (c-di-AMP). c-di-AMP likely acts as a signaling molecule that may couple DNA integrity with a cellular process. The chain is DNA integrity scanning protein DisA from Beutenbergia cavernae (strain ATCC BAA-8 / DSM 12333 / CCUG 43141 / JCM 11478 / NBRC 16432 / NCIMB 13614 / HKI 0122).